A 157-amino-acid polypeptide reads, in one-letter code: MSWYRAASVGRRLVASGRILAGRRGAAGAAGSGMGNSTSSFWGKSATTPVNQIQETISNNCVVIFSKSSCSYCSMAKKIFHDMNVNYKVVELDMVEYGSQFQEALYKMTGERTVPRIFVNGIFIGGAADTHRLHKEGKLLPLVHQCYLNKSKRKDVE.

The transit peptide at 1–19 directs the protein to the mitochondrion; sequence MSWYRAASVGRRLVASGRI. The Glutaredoxin domain maps to 50–150; the sequence is VNQIQETISN…PLVHQCYLNK (101 aa). Cysteine 61 is a binding site for [2Fe-2S] cluster. Position 67 (lysine 67) interacts with glutathione. Cysteine 70 is subject to S-glutathionyl cysteine; alternate. Cysteine 70 and cysteine 73 form a disulfide bridge. The glutathione site is built by glutamine 102 and valine 114. Position 146 (cysteine 146) interacts with [2Fe-2S] cluster.

The protein belongs to the glutaredoxin family. In terms of assembly, monomer; active form. Homodimer; inactive form. The homodimer is probably linked by 1 2Fe-2S cluster.

The protein resides in the mitochondrion. The protein localises to the nucleus. With respect to regulation, the 2Fe-2S present in the homodimer leads to inactivation of the enzyme. The 2Fe-2S may serve as a redox sensor: the presence of one-electron oxidants or reductants leading to the loss of the 2Fe-2S cluster, subsequent monomerization and activation of the enzyme. In terms of biological role, glutathione-dependent oxidoreductase that facilitates the maintenance of mitochondrial redox homeostasis upon induction of apoptosis by oxidative stress. Involved in response to hydrogen peroxide and regulation of apoptosis caused by oxidative stress. Acts as a very efficient catalyst of monothiol reactions because of its high affinity for protein glutathione-mixed disulfides. Can receive electrons not only from glutathione (GSH), but also from thioredoxin reductase supporting both monothiol and dithiol reactions. Efficiently catalyzes both glutathionylation and deglutathionylation of mitochondrial complex I, which in turn regulates the superoxide production by the complex. Overexpression decreases the susceptibility to apoptosis and prevents loss of cardiolipin and cytochrome c release. This Rattus norvegicus (Rat) protein is Glutaredoxin-2, mitochondrial (Glrx2).